The chain runs to 131 residues: Large ribosomal subunit protein bL12 (131 aa).

A compositionally biased stretch (basic and acidic residues) spans serine 100–glycine 125. Residues serine 100–lysine 131 form a disordered region.

The protein belongs to the bacterial ribosomal protein bL12 family. As to quaternary structure, homodimer. Part of the ribosomal stalk of the 50S ribosomal subunit. Forms a multimeric L10(L12)X complex, where L10 forms an elongated spine to which 2 to 4 L12 dimers bind in a sequential fashion. Binds GTP-bound translation factors.

In terms of biological role, forms part of the ribosomal stalk which helps the ribosome interact with GTP-bound translation factors. Is thus essential for accurate translation. This chain is Large ribosomal subunit protein bL12, found in Cyanothece sp. (strain PCC 7425 / ATCC 29141).